The chain runs to 93 residues: Large ribosomal subunit protein bL31B (93 aa).

It belongs to the bacterial ribosomal protein bL31 family. Type B subfamily. Part of the 50S ribosomal subunit.

The protein is Large ribosomal subunit protein bL31B of Psychrobacter cryohalolentis (strain ATCC BAA-1226 / DSM 17306 / VKM B-2378 / K5).